A 250-amino-acid chain; its full sequence is 5-oxoprolinase subunit A (250 aa).

The protein belongs to the LamB/PxpA family. In terms of assembly, forms a complex composed of PxpA, PxpB and PxpC.

It catalyses the reaction 5-oxo-L-proline + ATP + 2 H2O = L-glutamate + ADP + phosphate + H(+). Functionally, catalyzes the cleavage of 5-oxoproline to form L-glutamate coupled to the hydrolysis of ATP to ADP and inorganic phosphate. The sequence is that of 5-oxoprolinase subunit A from Streptomyces griseus subsp. griseus (strain JCM 4626 / CBS 651.72 / NBRC 13350 / KCC S-0626 / ISP 5235).